The primary structure comprises 156 residues: Transcription elongation factor GreA (156 aa).

Residues 45–66 are a coiled coil; sequence NAEYHSAKEKQSFIEGRIKELE.

Belongs to the GreA/GreB family.

Its function is as follows. Necessary for efficient RNA polymerase transcription elongation past template-encoded arresting sites. The arresting sites in DNA have the property of trapping a certain fraction of elongating RNA polymerases that pass through, resulting in locked ternary complexes. Cleavage of the nascent transcript by cleavage factors such as GreA or GreB allows the resumption of elongation from the new 3'terminus. GreA releases sequences of 2 to 3 nucleotides. The sequence is that of Transcription elongation factor GreA from Jannaschia sp. (strain CCS1).